A 317-amino-acid chain; its full sequence is Aspartate carbamoyltransferase catalytic subunit (317 aa).

2 residues coordinate carbamoyl phosphate: R66 and T67. K94 contacts L-aspartate. Carbamoyl phosphate is bound by residues R116, H144, and Q147. R177 and R231 together coordinate L-aspartate. Residues G272 and P273 each coordinate carbamoyl phosphate.

It belongs to the aspartate/ornithine carbamoyltransferase superfamily. ATCase family. Heterododecamer (2C3:3R2) of six catalytic PyrB chains organized as two trimers (C3), and six regulatory PyrI chains organized as three dimers (R2).

The enzyme catalyses carbamoyl phosphate + L-aspartate = N-carbamoyl-L-aspartate + phosphate + H(+). The protein operates within pyrimidine metabolism; UMP biosynthesis via de novo pathway; (S)-dihydroorotate from bicarbonate: step 2/3. Its function is as follows. Catalyzes the condensation of carbamoyl phosphate and aspartate to form carbamoyl aspartate and inorganic phosphate, the committed step in the de novo pyrimidine nucleotide biosynthesis pathway. This Bradyrhizobium sp. (strain BTAi1 / ATCC BAA-1182) protein is Aspartate carbamoyltransferase catalytic subunit.